The sequence spans 282 residues: Phosphoglycerate mutase-like protein 1 (282 aa).

Residue histidine 23 is the Tele-phosphohistidine intermediate of the active site. Glutamate 135 (proton donor/acceptor) is an active-site residue.

The protein belongs to the phosphoglycerate mutase family.

In terms of biological role, may play a role in carbohydrates metabolism. The chain is Phosphoglycerate mutase-like protein 1 from Arabidopsis thaliana (Mouse-ear cress).